The sequence spans 103 residues: Large ribosomal subunit protein P1 (103 aa).

The disordered stretch occupies residues 66–103 (PAAGAPAAGAAGGAVEEKKEEKKAESEDESDDDMGLFD). Positions 80 to 90 (VEEKKEEKKAE) are enriched in basic and acidic residues. The span at 91-103 (SEDESDDDMGLFD) shows a compositional bias: acidic residues.

Belongs to the eukaryotic ribosomal protein P1/P2 family. As to quaternary structure, P1 and P2 exist as dimers at the large ribosomal subunit.

Its function is as follows. Plays an important role in the elongation step of protein synthesis. The polypeptide is Large ribosomal subunit protein P1 (Polyorchis penicillatus (Hydromedusa)).